We begin with the raw amino-acid sequence, 1460 residues long: ABC transporter C family member 5 (1460 aa).

Disordered regions lie at residues Met1–Glu23 and Gly37–Asn68. The span at Gly37–Ser55 shows a compositional bias: low complexity. 5 helical membrane passes run Phe196 to Phe216, Leu238 to Tyr258, Leu320 to Trp340, Leu425 to Tyr445, and Ile456 to Gly476. An ABC transmembrane type-1 1 domain is found at Phe196–Gln482. Positions Ile537–Lys567 are disordered. The span at Ser551–Asn563 shows a compositional bias: polar residues. An ABC transporter 1 domain is found at Asn560 to Leu783. Gly593 to Ser600 is an ATP binding site. Helical transmembrane passes span Met842 to Ile862, Ala922 to Val942, Ile1014 to Ile1034, and Trp1108 to Ile1128. An ABC transmembrane type-1 2 domain is found at Phe853–Thr1166. One can recognise an ABC transporter 2 domain in the interval Ile1210–Asp1444. Gly1244–Ser1251 is an ATP binding site.

This sequence belongs to the ABC transporter superfamily. ABCC family. Conjugate transporter (TC 3.A.1.208) subfamily.

The protein localises to the membrane. This is ABC transporter C family member 5 (abcC5) from Dictyostelium discoideum (Social amoeba).